The sequence spans 119 residues: Ribosome-binding factor A (119 aa).

Belongs to the RbfA family. As to quaternary structure, monomer. Binds 30S ribosomal subunits, but not 50S ribosomal subunits or 70S ribosomes.

Its subcellular location is the cytoplasm. One of several proteins that assist in the late maturation steps of the functional core of the 30S ribosomal subunit. Associates with free 30S ribosomal subunits (but not with 30S subunits that are part of 70S ribosomes or polysomes). Required for efficient processing of 16S rRNA. May interact with the 5'-terminal helix region of 16S rRNA. The protein is Ribosome-binding factor A of Coxiella burnetii (strain CbuG_Q212) (Coxiella burnetii (strain Q212)).